We begin with the raw amino-acid sequence, 130 residues long: MAQIPSSRTNGSGAQMRVFGLHVYGNFYECANTELLKSPEELEKVVLEAAREGGMTVLDIKSWKIGEGVSVVAIILESHITVHTWPEYRFATVDVYSCGGHTNPHRAFEVLAEALKPARVEKGVAERHLE.

Catalysis depends on Ser78, which acts as the Schiff-base intermediate with substrate; via pyruvic acid. Ser78 carries the pyruvic acid (Ser); by autocatalysis modification. Catalysis depends on His83, which acts as the Proton acceptor; for processing activity. Catalysis depends on Cys98, which acts as the Proton donor; for catalytic activity.

The protein belongs to the prokaryotic AdoMetDC family. Type 1 subfamily. Heterotetramer of two alpha and two beta chains arranged as a dimer of alpha/beta heterodimers. It depends on pyruvate as a cofactor. In terms of processing, is synthesized initially as an inactive proenzyme. Formation of the active enzyme involves a self-maturation process in which the active site pyruvoyl group is generated from an internal serine residue via an autocatalytic post-translational modification. Two non-identical subunits are generated from the proenzyme in this reaction, and the pyruvate is formed at the N-terminus of the alpha chain, which is derived from the carboxyl end of the proenzyme. The post-translation cleavage follows an unusual pathway, termed non-hydrolytic serinolysis, in which the side chain hydroxyl group of the serine supplies its oxygen atom to form the C-terminus of the beta chain, while the remainder of the serine residue undergoes an oxidative deamination to produce ammonia and the pyruvoyl group blocking the N-terminus of the alpha chain.

It carries out the reaction S-adenosyl-L-methionine + H(+) = S-adenosyl 3-(methylsulfanyl)propylamine + CO2. The protein operates within amine and polyamine biosynthesis; S-adenosylmethioninamine biosynthesis; S-adenosylmethioninamine from S-adenosyl-L-methionine: step 1/1. Functionally, catalyzes the decarboxylation of S-adenosylmethionine to S-adenosylmethioninamine (dcAdoMet), the propylamine donor required for the synthesis of the polyamines spermine and spermidine from the diamine putrescine. The protein is S-adenosylmethionine decarboxylase proenzyme of Aeropyrum pernix (strain ATCC 700893 / DSM 11879 / JCM 9820 / NBRC 100138 / K1).